A 43-amino-acid polypeptide reads, in one-letter code: Potassium channel toxin gamma-KTx 4.3 (43 aa).

4 cysteine pairs are disulfide-bonded: Cys5–Cys23, Cys11–Cys34, Cys20–Cys39, and Cys24–Cys41.

Belongs to the ergtoxin family. Gamma-KTx 4 subfamily. Expressed by the venom gland.

It localises to the secreted. Its function is as follows. Reversibly blocks Kv11/ERG potassium channels. The chain is Potassium channel toxin gamma-KTx 4.3 from Centruroides exilicauda (Bark scorpion).